The following is a 269-amino-acid chain: 3-methyl-2-oxobutanoate hydroxymethyltransferase (269 aa).

Mg(2+) contacts are provided by D43 and D82. Residues 43-44 (DS), D82, and K110 contribute to the 3-methyl-2-oxobutanoate site. A Mg(2+)-binding site is contributed by E112. Residue E179 is the Proton acceptor of the active site.

Belongs to the PanB family. In terms of assembly, homodecamer; pentamer of dimers. Requires Mg(2+) as cofactor.

It is found in the cytoplasm. It carries out the reaction 3-methyl-2-oxobutanoate + (6R)-5,10-methylene-5,6,7,8-tetrahydrofolate + H2O = 2-dehydropantoate + (6S)-5,6,7,8-tetrahydrofolate. It functions in the pathway cofactor biosynthesis; (R)-pantothenate biosynthesis; (R)-pantoate from 3-methyl-2-oxobutanoate: step 1/2. Catalyzes the reversible reaction in which hydroxymethyl group from 5,10-methylenetetrahydrofolate is transferred onto alpha-ketoisovalerate to form ketopantoate. The protein is 3-methyl-2-oxobutanoate hydroxymethyltransferase of Acinetobacter baumannii (strain AB307-0294).